A 233-amino-acid polypeptide reads, in one-letter code: Orotidine 5'-phosphate decarboxylase (233 aa).

Substrate contacts are provided by residues aspartate 13, lysine 35, 62–71 (DLKFHDIPNT), threonine 122, arginine 182, glutamine 191, glycine 211, and arginine 212. The Proton donor role is filled by lysine 64.

Belongs to the OMP decarboxylase family. Type 1 subfamily. In terms of assembly, homodimer.

The enzyme catalyses orotidine 5'-phosphate + H(+) = UMP + CO2. It functions in the pathway pyrimidine metabolism; UMP biosynthesis via de novo pathway; UMP from orotate: step 2/2. In terms of biological role, catalyzes the decarboxylation of orotidine 5'-monophosphate (OMP) to uridine 5'-monophosphate (UMP). The chain is Orotidine 5'-phosphate decarboxylase from Pseudomonas putida (strain ATCC 47054 / DSM 6125 / CFBP 8728 / NCIMB 11950 / KT2440).